A 215-amino-acid polypeptide reads, in one-letter code: tRNA (guanine-N(7)-)-methyltransferase (215 aa).

S-adenosyl-L-methionine contacts are provided by E44, E69, D96, and D118. D118 is a catalytic residue. Substrate is bound by residues K122, D154, and 192-195 (TEYE).

Belongs to the class I-like SAM-binding methyltransferase superfamily. TrmB family.

The catalysed reaction is guanosine(46) in tRNA + S-adenosyl-L-methionine = N(7)-methylguanosine(46) in tRNA + S-adenosyl-L-homocysteine. It participates in tRNA modification; N(7)-methylguanine-tRNA biosynthesis. In terms of biological role, catalyzes the formation of N(7)-methylguanine at position 46 (m7G46) in tRNA. The protein is tRNA (guanine-N(7)-)-methyltransferase of Levilactobacillus brevis (strain ATCC 367 / BCRC 12310 / CIP 105137 / JCM 1170 / LMG 11437 / NCIMB 947 / NCTC 947) (Lactobacillus brevis).